The primary structure comprises 240 residues: Thymidylate kinase (240 aa).

10 to 17 (GINGVGKS) serves as a coordination point for ATP.

Belongs to the thymidylate kinase family.

The catalysed reaction is dTMP + ATP = dTDP + ADP. It functions in the pathway pyrimidine metabolism; dTTP biosynthesis. Functionally, catalyzes the conversion of dTMP to dTDP. The polypeptide is Thymidylate kinase (TMK) (African swine fever virus (strain Badajoz 1971 Vero-adapted) (Ba71V)).